We begin with the raw amino-acid sequence, 328 residues long: Putative tyrosine-protein kinase C03B1.5 (328 aa).

The 264-residue stretch at 25–288 (WSPALKIGSG…ALHASSQTYL (264 aa)) folds into the Protein kinase domain. ATP contacts are provided by residues 31–39 (IGSGAFGEV) and lysine 62. The active-site Proton acceptor is the aspartate 155.

This sequence belongs to the protein kinase superfamily. Tyr protein kinase family.

It catalyses the reaction L-tyrosyl-[protein] + ATP = O-phospho-L-tyrosyl-[protein] + ADP + H(+). In Caenorhabditis elegans, this protein is Putative tyrosine-protein kinase C03B1.5.